We begin with the raw amino-acid sequence, 345 residues long: Quinolinate synthase (345 aa).

2 residues coordinate iminosuccinate: His69 and Ser87. [4Fe-4S] cluster is bound at residue Cys132. Residues 158–160 (YVN) and Ser175 contribute to the iminosuccinate site. Cys217 contacts [4Fe-4S] cluster. Iminosuccinate contacts are provided by residues 243–245 (HPE) and Thr260. Residue Cys303 participates in [4Fe-4S] cluster binding.

This sequence belongs to the quinolinate synthase family. Type 2 subfamily. Requires [4Fe-4S] cluster as cofactor.

It localises to the cytoplasm. The catalysed reaction is iminosuccinate + dihydroxyacetone phosphate = quinolinate + phosphate + 2 H2O + H(+). Its pathway is cofactor biosynthesis; NAD(+) biosynthesis; quinolinate from iminoaspartate: step 1/1. Its function is as follows. Catalyzes the condensation of iminoaspartate with dihydroxyacetone phosphate to form quinolinate. The protein is Quinolinate synthase of Agrobacterium fabrum (strain C58 / ATCC 33970) (Agrobacterium tumefaciens (strain C58)).